The primary structure comprises 1027 residues: Multidrug resistance protein MdtC (1027 aa).

The next 12 helical transmembrane spans lie at L16–P36, E333–L353, L360–C380, L387–L407, V431–L451, F463–P483, W528–P548, L853–S873, I875–L895, L897–V917, P953–G973, and I984–I1004.

It belongs to the resistance-nodulation-cell division (RND) (TC 2.A.6) family. MdtC subfamily. In terms of assembly, part of a tripartite efflux system composed of MdtA, MdtB and MdtC. MdtC forms a heteromultimer with MdtB.

Its subcellular location is the cell inner membrane. The protein is Multidrug resistance protein MdtC of Proteus mirabilis (strain HI4320).